The primary structure comprises 200 residues: ATP synthase subunit s, mitochondrial (200 aa).

The transit peptide at 1 to 25 (MMMFGKISRQLFSLKKIPWSCDSRY) directs the protein to the mitochondrion. Positions 1–61 (MMMFGKISRQ…SEWLLRCGAK (61 aa)) are N-terminal domain. Gly-59 provides a ligand contact to Mg(2+). 4 LRR repeats span residues 62 to 87 (VRYCGHQKWLQDYNKLPGGSVDRYKI), 88 to 116 (QAIDATDSCIMDIGFDHLVGLEHVERITL), 117 to 141 (CRCHYIEDNCLQRLSQLENLRKSLL), and 142 to 173 (ELEIIACGNVTDNGVIALRHFKNLKYLFLSDL). Thr-93 contributes to the Mg(2+) binding site.

Belongs to the ATP synthase subunit s family. As to quaternary structure, homotetramer. Associates with ATP synthase.

The protein localises to the mitochondrion. It localises to the mitochondrion inner membrane. Its function is as follows. Involved in regulation of mitochondrial membrane ATP synthase. Necessary for H(+) conduction of ATP synthase. Facilitates energy-driven catalysis of ATP synthesis by blocking a proton leak through an alternative proton exit pathway. The protein is ATP synthase subunit s, mitochondrial of Rattus norvegicus (Rat).